A 101-amino-acid polypeptide reads, in one-letter code: Small ribosomal subunit protein bS18c (101 aa).

The protein belongs to the bacterial ribosomal protein bS18 family. As to quaternary structure, part of the 30S ribosomal subunit.

Its subcellular location is the plastid. The protein resides in the chloroplast. The protein is Small ribosomal subunit protein bS18c of Guizotia abyssinica (Niger).